Here is a 682-residue protein sequence, read N- to C-terminus: Probable potassium transport system protein Kup (682 aa).

A run of 12 helical transmembrane segments spans residues 13-33 (GLLV…LYVM), 55-75 (ISLI…LIAL), 98-118 (WLVI…TLTP), 138-158 (IPVP…LFLF), 171-191 (TFGP…IMNL), 217-237 (VGVL…ALYS), 250-270 (SWPY…VWIL), 295-315 (FFAI…LITG), 344-364 (LFIP…VFLF), 375-395 (GLAI…YLSL), 405-425 (VFLL…LAKF), and 428-448 (GGYV…IWYF).

The protein belongs to the HAK/KUP transporter (TC 2.A.72) family.

Its subcellular location is the cell membrane. It carries out the reaction K(+)(in) + H(+)(in) = K(+)(out) + H(+)(out). In terms of biological role, transport of potassium into the cell. Likely operates as a K(+):H(+) symporter. The chain is Probable potassium transport system protein Kup from Lactobacillus gasseri (strain ATCC 33323 / DSM 20243 / BCRC 14619 / CIP 102991 / JCM 1131 / KCTC 3163 / NCIMB 11718 / NCTC 13722 / AM63).